A 176-amino-acid chain; its full sequence is Large ribosomal subunit protein uL15 (176 aa).

Residues 1 to 13 are compositionally biased toward basic and acidic residues; sequence MKLNDLRDNEGAR. Disordered stretches follow at residues 1–48 and 151–176; these read MKLN…AIKG and IPAA…AKAE. Over residues 21–35 the composition is skewed to gly residues; it reads RGIGSGKGKTGGRGQ. Basic and acidic residues predominate over residues 156–176; it reads PEHEKKAARSEANKKAKAKAE.

It belongs to the universal ribosomal protein uL15 family. Part of the 50S ribosomal subunit.

In terms of biological role, binds to the 23S rRNA. The sequence is that of Large ribosomal subunit protein uL15 from Erythrobacter litoralis (strain HTCC2594).